Consider the following 251-residue polypeptide: Tryptophan synthase alpha chain (251 aa).

Catalysis depends on proton acceptor residues glutamate 36 and aspartate 47.

This sequence belongs to the TrpA family. In terms of assembly, tetramer of two alpha and two beta chains.

It carries out the reaction (1S,2R)-1-C-(indol-3-yl)glycerol 3-phosphate + L-serine = D-glyceraldehyde 3-phosphate + L-tryptophan + H2O. Its pathway is amino-acid biosynthesis; L-tryptophan biosynthesis; L-tryptophan from chorismate: step 5/5. The alpha subunit is responsible for the aldol cleavage of indoleglycerol phosphate to indole and glyceraldehyde 3-phosphate. This is Tryptophan synthase alpha chain from Thermococcus kodakarensis (strain ATCC BAA-918 / JCM 12380 / KOD1) (Pyrococcus kodakaraensis (strain KOD1)).